A 322-amino-acid chain; its full sequence is Phosphatidylserine decarboxylase proenzyme (322 aa).

Residues D90, H147, and S254 each act as charge relay system; for autoendoproteolytic cleavage activity in the active site. Residue S254 is the Schiff-base intermediate with substrate; via pyruvic acid; for decarboxylase activity of the active site. S254 is modified (pyruvic acid (Ser); by autocatalysis). Residues 293 to 322 are disordered; it reads PDAEPAPLPAEEIEAEHDASPLVDDKKDQV. The segment covering 308-322 has biased composition (basic and acidic residues); sequence EHDASPLVDDKKDQV.

It belongs to the phosphatidylserine decarboxylase family. PSD-B subfamily. Prokaryotic type I sub-subfamily. In terms of assembly, heterodimer of a large membrane-associated beta subunit and a small pyruvoyl-containing alpha subunit. Requires pyruvate as cofactor. In terms of processing, is synthesized initially as an inactive proenzyme. Formation of the active enzyme involves a self-maturation process in which the active site pyruvoyl group is generated from an internal serine residue via an autocatalytic post-translational modification. Two non-identical subunits are generated from the proenzyme in this reaction, and the pyruvate is formed at the N-terminus of the alpha chain, which is derived from the carboxyl end of the proenzyme. The autoendoproteolytic cleavage occurs by a canonical serine protease mechanism, in which the side chain hydroxyl group of the serine supplies its oxygen atom to form the C-terminus of the beta chain, while the remainder of the serine residue undergoes an oxidative deamination to produce ammonia and the pyruvoyl prosthetic group on the alpha chain. During this reaction, the Ser that is part of the protease active site of the proenzyme becomes the pyruvoyl prosthetic group, which constitutes an essential element of the active site of the mature decarboxylase.

It localises to the cell membrane. It catalyses the reaction a 1,2-diacyl-sn-glycero-3-phospho-L-serine + H(+) = a 1,2-diacyl-sn-glycero-3-phosphoethanolamine + CO2. It participates in phospholipid metabolism; phosphatidylethanolamine biosynthesis; phosphatidylethanolamine from CDP-diacylglycerol: step 2/2. Its function is as follows. Catalyzes the formation of phosphatidylethanolamine (PtdEtn) from phosphatidylserine (PtdSer). The chain is Phosphatidylserine decarboxylase proenzyme from Escherichia coli O139:H28 (strain E24377A / ETEC).